Consider the following 72-residue polypeptide: Sec-independent protein translocase protein TatA (72 aa).

Residues 1-21 (MLGGISIWQLLIVLAILVLIF) traverse the membrane as a helical segment.

It belongs to the TatA/E family. In terms of assembly, the Tat system comprises two distinct complexes: a TatABC complex, containing multiple copies of TatA, TatB and TatC subunits, and a separate TatA complex, containing only TatA subunits. Substrates initially bind to the TatABC complex, which probably triggers association of the separate TatA complex to form the active translocon.

Its subcellular location is the cell inner membrane. Functionally, part of the twin-arginine translocation (Tat) system that transports large folded proteins containing a characteristic twin-arginine motif in their signal peptide across membranes. TatA could form the protein-conducting channel of the Tat system. In Marinomonas sp. (strain MWYL1), this protein is Sec-independent protein translocase protein TatA.